The chain runs to 102 residues: Large ribosomal subunit protein bL21 (102 aa).

It belongs to the bacterial ribosomal protein bL21 family. As to quaternary structure, part of the 50S ribosomal subunit. Contacts protein L20.

Its function is as follows. This protein binds to 23S rRNA in the presence of protein L20. This chain is Large ribosomal subunit protein bL21, found in Stenotrophomonas maltophilia (strain K279a).